The chain runs to 245 residues: Adenosylcobinamide-GDP ribazoletransferase (245 aa).

5 helical membrane-spanning segments follow: residues 31 to 51, 61 to 81, 113 to 133, 138 to 158, and 192 to 212; these read FGRAVLCYPLVGVLIGVVLYA, PLLQAALLLSLWVALSGALHL, VAVVVLVLVLLLKFSALAALL, AGLLPLAPWLARSSLPLLFLT, and LAFGLAGLLALLVTLMLFAWL.

The protein belongs to the CobS family. The cofactor is Mg(2+).

The protein resides in the cell inner membrane. The catalysed reaction is alpha-ribazole + adenosylcob(III)inamide-GDP = adenosylcob(III)alamin + GMP + H(+). It catalyses the reaction alpha-ribazole 5'-phosphate + adenosylcob(III)inamide-GDP = adenosylcob(III)alamin 5'-phosphate + GMP + H(+). Its pathway is cofactor biosynthesis; adenosylcobalamin biosynthesis; adenosylcobalamin from cob(II)yrinate a,c-diamide: step 7/7. Functionally, joins adenosylcobinamide-GDP and alpha-ribazole to generate adenosylcobalamin (Ado-cobalamin). Also synthesizes adenosylcobalamin 5'-phosphate from adenosylcobinamide-GDP and alpha-ribazole 5'-phosphate. The sequence is that of Adenosylcobinamide-GDP ribazoletransferase from Pseudomonas aeruginosa (strain ATCC 15692 / DSM 22644 / CIP 104116 / JCM 14847 / LMG 12228 / 1C / PRS 101 / PAO1).